The sequence spans 564 residues: Myb-like protein F (564 aa).

3 disordered regions span residues 22–107, 122–203, and 310–410; these read YNNS…NYNN, NYNN…YNGG, and NYNN…TKKY. The segment covering 23–79 has biased composition (low complexity); it reads NNSNHYNDNNDNNNNNNNNNNDNNNNDNNNNNNNNNNSIINNESDNESNGTSNNYND. A compositionally biased stretch (basic and acidic residues) spans 82 to 96; that stretch reads NDNHHHHQDDEHHGN. Low complexity-rich tracts occupy residues 97-107, 135-173, 193-203, and 310-364; these read GNDNDNENYNN, EINSNHNNDNNNNTNNNDNSSNNNNNNNNSNNNNNNNSK, NNNNNNKYNGG, and NYNN…NSSN. Positions 365 to 409 are enriched in basic and acidic residues; the sequence is KEYKEKEYKEKEYKEKEFKESKDSSLKRKSSSDDDGDDSGRDTKK. The region spanning 412–464 is the SANT domain; that stretch reads PGRTVWTLEEEELYKEVFNHYGKNWKKIKTHFPDKSKSQVTSHGQYLIKINKL. Positions 519-556 are enriched in low complexity; sequence NNENTNDNNNHNNNNYNDNNNNSNNNNNFNNSNNNNTN. The disordered stretch occupies residues 519–564; that stretch reads NNENTNDNNNHNNNNYNDNNNNSNNNNNFNNSNNNNTNKFIDEDDD.

Its subcellular location is the nucleus. In Dictyostelium discoideum (Social amoeba), this protein is Myb-like protein F (mybF).